The primary structure comprises 92 residues: Long neurotoxin 3FTx-Oxy2 (92 aa).

Residues 1 to 21 (MKTLLLTLVVVTIVCLDLGYT) form the signal peptide. 4 disulfide bridges follow: Cys-24–Cys-42, Cys-35–Cys-63, Cys-67–Cys-79, and Cys-80–Cys-85.

This sequence belongs to the three-finger toxin family. Long-chain subfamily. Type II alpha-neurotoxin sub-subfamily. In terms of tissue distribution, expressed by the venom gland.

It localises to the secreted. Its function is as follows. Binds with high affinity to muscular (alpha-1/CHRNA1) and neuronal (alpha-7/CHRNA7) nicotinic acetylcholine receptor (nAChR) and inhibits acetylcholine from binding to the receptor, thereby impairing neuromuscular and neuronal transmission. In Oxyuranus microlepidotus (Inland taipan), this protein is Long neurotoxin 3FTx-Oxy2.